Here is a 163-residue protein sequence, read N- to C-terminus: Putative NOL1/NOP2/Sun domain family member 5B (163 aa).

The Nucleophile role is filled by C93.

This sequence belongs to the class I-like SAM-binding methyltransferase superfamily. RsmB/NOP family. In terms of tissue distribution, ubiquitous.

The polypeptide is Putative NOL1/NOP2/Sun domain family member 5B (NSUN5P1) (Homo sapiens (Human)).